Consider the following 441-residue polypeptide: Ribosomal protein uS12 methylthiotransferase RimO (441 aa).

Residues 8 to 118 (PKIGFVSLGC…VLEHVHHYVP (111 aa)) enclose the MTTase N-terminal domain. 6 residues coordinate [4Fe-4S] cluster: cysteine 17, cysteine 53, cysteine 82, cysteine 150, cysteine 154, and cysteine 157. The Radical SAM core domain occupies 136-373 (LTPRHYAYLK…MQLQQQISAE (238 aa)). One can recognise a TRAM domain in the interval 376–441 (QEKVGREILV…DEYDLWGSRV (66 aa)).

Belongs to the methylthiotransferase family. RimO subfamily. The cofactor is [4Fe-4S] cluster.

It localises to the cytoplasm. It catalyses the reaction L-aspartate(89)-[ribosomal protein uS12]-hydrogen + (sulfur carrier)-SH + AH2 + 2 S-adenosyl-L-methionine = 3-methylsulfanyl-L-aspartate(89)-[ribosomal protein uS12]-hydrogen + (sulfur carrier)-H + 5'-deoxyadenosine + L-methionine + A + S-adenosyl-L-homocysteine + 2 H(+). In terms of biological role, catalyzes the methylthiolation of an aspartic acid residue of ribosomal protein uS12. In Citrobacter koseri (strain ATCC BAA-895 / CDC 4225-83 / SGSC4696), this protein is Ribosomal protein uS12 methylthiotransferase RimO.